The sequence spans 379 residues: UDP-N-acetylglucosamine--N-acetylmuramyl-(pentapeptide) pyrophosphoryl-undecaprenol N-acetylglucosamine transferase (379 aa).

UDP-N-acetyl-alpha-D-glucosamine-binding positions include 19-21, Asn133, Arg174, Ser207, Ile261, and Gln306; that span reads TGG.

This sequence belongs to the glycosyltransferase 28 family. MurG subfamily.

The protein resides in the cell inner membrane. The enzyme catalyses di-trans,octa-cis-undecaprenyl diphospho-N-acetyl-alpha-D-muramoyl-L-alanyl-D-glutamyl-meso-2,6-diaminopimeloyl-D-alanyl-D-alanine + UDP-N-acetyl-alpha-D-glucosamine = di-trans,octa-cis-undecaprenyl diphospho-[N-acetyl-alpha-D-glucosaminyl-(1-&gt;4)]-N-acetyl-alpha-D-muramoyl-L-alanyl-D-glutamyl-meso-2,6-diaminopimeloyl-D-alanyl-D-alanine + UDP + H(+). It participates in cell wall biogenesis; peptidoglycan biosynthesis. Cell wall formation. Catalyzes the transfer of a GlcNAc subunit on undecaprenyl-pyrophosphoryl-MurNAc-pentapeptide (lipid intermediate I) to form undecaprenyl-pyrophosphoryl-MurNAc-(pentapeptide)GlcNAc (lipid intermediate II). This chain is UDP-N-acetylglucosamine--N-acetylmuramyl-(pentapeptide) pyrophosphoryl-undecaprenol N-acetylglucosamine transferase, found in Porphyromonas gingivalis (strain ATCC 33277 / DSM 20709 / CIP 103683 / JCM 12257 / NCTC 11834 / 2561).